Here is a 136-residue protein sequence, read N- to C-terminus: Large ribosomal subunit protein uL13 (136 aa).

This sequence belongs to the universal ribosomal protein uL13 family. In terms of assembly, part of the 50S ribosomal subunit.

Functionally, this protein is one of the early assembly proteins of the 50S ribosomal subunit, although it is not seen to bind rRNA by itself. It is important during the early stages of 50S assembly. The protein is Large ribosomal subunit protein uL13 of Thermoplasma acidophilum (strain ATCC 25905 / DSM 1728 / JCM 9062 / NBRC 15155 / AMRC-C165).